The chain runs to 313 residues: Tagatose-6-phosphate kinase (313 aa).

The protein belongs to the carbohydrate kinase PfkB family. LacC subfamily.

It catalyses the reaction D-tagatofuranose 6-phosphate + ATP = D-tagatofuranose 1,6-bisphosphate + ADP + H(+). The protein operates within carbohydrate metabolism; D-tagatose 6-phosphate degradation; D-glyceraldehyde 3-phosphate and glycerone phosphate from D-tagatose 6-phosphate: step 1/2. This Enterococcus faecalis (strain ATCC 700802 / V583) protein is Tagatose-6-phosphate kinase.